The sequence spans 321 residues: Probable pectate lyase A (321 aa).

The first 18 residues, 1–18 (MKFVATLIACGLSGLALA), serve as a signal peptide directing secretion. Asparagine 93 is a glycosylation site (N-linked (GlcNAc...) asparagine). Positions 134, 163, and 167 each coordinate Ca(2+). Residue arginine 220 is part of the active site. Asparagine 238 is a glycosylation site (N-linked (GlcNAc...) asparagine).

The protein belongs to the polysaccharide lyase 1 family. Requires Ca(2+) as cofactor.

It is found in the secreted. It carries out the reaction Eliminative cleavage of (1-&gt;4)-alpha-D-galacturonan to give oligosaccharides with 4-deoxy-alpha-D-galact-4-enuronosyl groups at their non-reducing ends.. Functionally, pectinolytic enzyme consist of four classes of enzymes: pectin lyase, polygalacturonase, pectin methylesterase and rhamnogalacturonase. Among pectinolytic enzymes, pectin lyase is the most important in depolymerization of pectin, since it cleaves internal glycosidic bonds of highly methylated pectins. Favors pectate, the anion, over pectin, the methyl ester. The polypeptide is Probable pectate lyase A (plyA) (Neosartorya fischeri (strain ATCC 1020 / DSM 3700 / CBS 544.65 / FGSC A1164 / JCM 1740 / NRRL 181 / WB 181) (Aspergillus fischerianus)).